We begin with the raw amino-acid sequence, 118 residues long: Large ribosomal subunit protein bL20 (118 aa).

The protein belongs to the bacterial ribosomal protein bL20 family.

Binds directly to 23S ribosomal RNA and is necessary for the in vitro assembly process of the 50S ribosomal subunit. It is not involved in the protein synthesizing functions of that subunit. The polypeptide is Large ribosomal subunit protein bL20 (Lacticaseibacillus casei (strain BL23) (Lactobacillus casei)).